The following is a 460-amino-acid chain: Chromosomal replication initiator protein DnaA (460 aa).

A domain I, interacts with DnaA modulators region spans residues 1-84; sequence MAVSLWQQCI…RFDIGSRPSA (84 aa). The interval 84-123 is domain II; that stretch reads AKKPEPAPVAAVRVPNPQTKASVGTSFNTTEPVANTNHRS. Positions 103 to 123 are disordered; it reads KASVGTSFNTTEPVANTNHRS. A domain III, AAA+ region region spans residues 124–340; sequence NINPTYQFDN…GALNRVIANA (217 aa). The ATP site is built by Gly-168, Gly-170, Lys-171, and Thr-172. A domain IV, binds dsDNA region spans residues 341 to 460; it reads NFTGRPITID…YANLIRTLSS (120 aa).

Belongs to the DnaA family. Oligomerizes as a right-handed, spiral filament on DNA at oriC.

It localises to the cytoplasm. Functionally, plays an essential role in the initiation and regulation of chromosomal replication. ATP-DnaA binds to the origin of replication (oriC) to initiate formation of the DNA replication initiation complex once per cell cycle. Binds the DnaA box (a 9 base pair repeat at the origin) and separates the double-stranded (ds)DNA. Forms a right-handed helical filament on oriC DNA; dsDNA binds to the exterior of the filament while single-stranded (ss)DNA is stabiized in the filament's interior. The ATP-DnaA-oriC complex binds and stabilizes one strand of the AT-rich DNA unwinding element (DUE), permitting loading of DNA polymerase. After initiation quickly degrades to an ADP-DnaA complex that is not apt for DNA replication. Binds acidic phospholipids. The chain is Chromosomal replication initiator protein DnaA from Shewanella sp. (strain MR-4).